A 475-amino-acid chain; its full sequence is Aspartyl/glutamyl-tRNA(Asn/Gln) amidotransferase subunit B (475 aa).

It belongs to the GatB/GatE family. GatB subfamily. As to quaternary structure, heterotrimer of A, B and C subunits.

The enzyme catalyses L-glutamyl-tRNA(Gln) + L-glutamine + ATP + H2O = L-glutaminyl-tRNA(Gln) + L-glutamate + ADP + phosphate + H(+). The catalysed reaction is L-aspartyl-tRNA(Asn) + L-glutamine + ATP + H2O = L-asparaginyl-tRNA(Asn) + L-glutamate + ADP + phosphate + 2 H(+). Allows the formation of correctly charged Asn-tRNA(Asn) or Gln-tRNA(Gln) through the transamidation of misacylated Asp-tRNA(Asn) or Glu-tRNA(Gln) in organisms which lack either or both of asparaginyl-tRNA or glutaminyl-tRNA synthetases. The reaction takes place in the presence of glutamine and ATP through an activated phospho-Asp-tRNA(Asn) or phospho-Glu-tRNA(Gln). The polypeptide is Aspartyl/glutamyl-tRNA(Asn/Gln) amidotransferase subunit B (Pelodictyon phaeoclathratiforme (strain DSM 5477 / BU-1)).